The sequence spans 269 residues: Exodeoxyribonuclease WalJ (269 aa).

A divalent metal cation-binding residues include His61, His63, Asp65, His66, and Asp150.

The protein belongs to the metallo-beta-lactamase superfamily. Requires Fe(2+) as cofactor. The cofactor is Zn(2+). Mn(2+) is required as a cofactor.

Its subcellular location is the cell membrane. 5'-&gt;3' double-stranded DNA exonuclease. May be involved in the WalK/WalR signal transduction pathway. Required for accurate coordination of cell division with DNA replication. May play a role in cell wall metabolism. The polypeptide is Exodeoxyribonuclease WalJ (Streptococcus pneumoniae serotype 2 (strain D39 / NCTC 7466)).